We begin with the raw amino-acid sequence, 419 residues long: CinA-like protein (419 aa).

The protein belongs to the CinA family.

This is CinA-like protein from Leptospira borgpetersenii serovar Hardjo-bovis (strain JB197).